The following is a 371-amino-acid chain: uncharacterized protein (371 aa).

Residues 110 to 140 (MEKFIDFDRCNKCGECARKICKAKWTPLNYL) enclose the 4Fe-4S ferredoxin-type domain.

This is an uncharacterized protein from Methanocaldococcus jannaschii (strain ATCC 43067 / DSM 2661 / JAL-1 / JCM 10045 / NBRC 100440) (Methanococcus jannaschii).